The primary structure comprises 754 residues: Elongation factor G-1, mitochondrial (754 aa).

The N-terminal 17 residues, 1–17 (MARFPTSPAPNRLLRLF), are a transit peptide targeting the mitochondrion. Residues 63-340 (DKLRNIGISA…GVVSFLPSPN (278 aa)) enclose the tr-type G domain. GTP contacts are provided by residues 72-79 (AHIDSGKT), 139-143 (DTPGH), and 193-196 (NKLD).

It belongs to the TRAFAC class translation factor GTPase superfamily. Classic translation factor GTPase family. EF-G/EF-2 subfamily. As to expression, expressed in cotyledons and adult leaves at the same levels.

Its subcellular location is the mitochondrion. Its pathway is protein biosynthesis; polypeptide chain elongation. Functionally, mitochondrial GTPase that catalyzes the GTP-dependent ribosomal translocation step during translation elongation. During this step, the ribosome changes from the pre-translocational (PRE) to the post-translocational (POST) state as the newly formed A-site-bound peptidyl-tRNA and P-site-bound deacylated tRNA move to the P and E sites, respectively. Catalyzes the coordinated movement of the two tRNA molecules, the mRNA and conformational changes in the ribosome. The sequence is that of Elongation factor G-1, mitochondrial (MEFG1) from Arabidopsis thaliana (Mouse-ear cress).